The chain runs to 379 residues: MSGVVRTLSRCLLPAEAGARERRAGAARDAEREARRRSRDIDALLARERRAVRRLVKILLLGAGESGKSTFLKQMRIIHGREFDQKALLEFRDTIFDNILKGSRVLVDARDKLGIPWQHSENEKHGMFLMAFENKAGLPVEPATFQLYVPALSALWRDSGIREAFSRRSEFQLGESVKYFLDNLDRIGQLNYFPSKQDILLARKATKGIVEHDFVIKKIPFKMVDVGGQRSQRQKWFQCFDGITSILFMVSSSEYDQVLMEDRRTNRLVESMNIFETIVNNKLFFNVSIILFLNKMDLLVEKVKSVSIKKHFPDFKGDPHRLEDVQRYLVQCFDRKRRNRGKPLFHHFTTAIDTENIRFVFHAVKDTILQENLKDIMLQ.

Residue C11 is the site of S-palmitoyl cysteine attachment. The region spanning 54-379 is the G-alpha domain; it reads RLVKILLLGA…QENLKDIMLQ (326 aa). The segment at 57–70 is G1 motif; sequence KILLLGAGESGKST. GTP-binding positions include 65-70 and 200-203; these read ESGKST and LLAR. S69 contacts Mg(2+). A G2 motif region spans residues 198-206; sequence DILLARKAT. Residue T206 participates in Mg(2+) binding. The residue at position 206 (T206) is a Phosphothreonine. A G3 motif region spans residues 221–230; the sequence is FKMVDVGGQR. The G4 motif stretch occupies residues 290-297; sequence ILFLNKMD. GTP contacts are provided by residues 294–297 and A351; that span reads NKMD. The segment at 349-354 is G5 motif; the sequence is TTAIDT.

This sequence belongs to the G-alpha family. G(12) subfamily. In terms of assembly, g proteins are composed of 3 units; alpha, beta and gamma. The alpha chain contains the guanine nucleotide binding site. Interacts with UBXD5. Interacts (in GTP-bound form) with PPP5C (via TPR repeats); activates PPP5C phosphatase activity and translocates PPP5C to the cell membrane. Interacts with RGS22. Interacts (via N-terminus) with NAPA; the interaction promotes CDH5 localization to plasma membrane. Interacts with CTNND1 (via N-terminus); the interaction regulates CDH1-mediated cell-cell adhesion. Interacts with PPP2R1A; the interaction promotes protein phosphatase 2A activation causing dephosphorylation of MAPT. Interacts (in GTP-bound form) with ARHGEF1. Interacts (in GTP-bound form) with ARHGEF11 (via RGS domain). Interacts (in GTP-bound form) with ARHGEF12 (via RGS domain).

Its subcellular location is the cell membrane. The protein localises to the lateral cell membrane. It is found in the cytoplasm. In terms of biological role, guanine nucleotide-binding proteins (G proteins) are involved as modulators or transducers in various transmembrane signaling systems. Activates effector molecule RhoA by binding and activating RhoGEFs (ARHGEF12/LARG). GNA12-dependent Rho signaling subsequently regulates transcription factor AP-1 (activating protein-1). GNA12-dependent Rho signaling also regulates protein phosphatese 2A activation causing dephosphorylation of its target proteins. Promotes tumor cell invasion and metastasis by activating RhoA/ROCK signaling pathway and up-regulating pro-inflammatory cytokine production. Inhibits CDH1-mediated cell adhesion in process independent from Rho activation. Together with NAPA promotes CDH5 localization to plasma membrane. May play a role in the control of cell migration through the TOR signaling cascade. The sequence is that of Guanine nucleotide-binding protein subunit alpha-12 (Gna12) from Rattus norvegicus (Rat).